A 319-amino-acid chain; its full sequence is Acetyl-coenzyme A carboxylase carboxyl transferase subunit alpha (319 aa).

The CoA carboxyltransferase C-terminal domain maps to 35–296 (NLDEEVQRLR…KAQLLADLLD (262 aa)).

Belongs to the AccA family. Acetyl-CoA carboxylase is a heterohexamer composed of biotin carboxyl carrier protein (AccB), biotin carboxylase (AccC) and two subunits each of ACCase subunit alpha (AccA) and ACCase subunit beta (AccD).

It is found in the cytoplasm. It carries out the reaction N(6)-carboxybiotinyl-L-lysyl-[protein] + acetyl-CoA = N(6)-biotinyl-L-lysyl-[protein] + malonyl-CoA. Its pathway is lipid metabolism; malonyl-CoA biosynthesis; malonyl-CoA from acetyl-CoA: step 1/1. Its function is as follows. Component of the acetyl coenzyme A carboxylase (ACC) complex. First, biotin carboxylase catalyzes the carboxylation of biotin on its carrier protein (BCCP) and then the CO(2) group is transferred by the carboxyltransferase to acetyl-CoA to form malonyl-CoA. This Pectobacterium atrosepticum (strain SCRI 1043 / ATCC BAA-672) (Erwinia carotovora subsp. atroseptica) protein is Acetyl-coenzyme A carboxylase carboxyl transferase subunit alpha.